We begin with the raw amino-acid sequence, 207 residues long: Large ribosomal subunit protein uL18 (207 aa).

The protein belongs to the universal ribosomal protein uL18 family. Part of the 50S ribosomal subunit. Contacts the 5S and 23S rRNAs.

Functionally, this is one of the proteins that bind and probably mediate the attachment of the 5S RNA into the large ribosomal subunit, where it forms part of the central protuberance. This chain is Large ribosomal subunit protein uL18, found in Caldivirga maquilingensis (strain ATCC 700844 / DSM 13496 / JCM 10307 / IC-167).